The following is a 184-amino-acid chain: ESX-1 secretion-associated protein EspD (184 aa).

Residues 33-56 form a disordered region; that stretch reads IGVGSAATPDTGPDLDNAHGQAET.

It is found in the secreted. Functionally, required for ESX-1 function. Required for the maintenance of adequate cellular levels of both EspA and EspC. Facilitates EsxA secretion. This chain is ESX-1 secretion-associated protein EspD, found in Mycobacterium tuberculosis (strain CDC 1551 / Oshkosh).